The following is a 416-amino-acid chain: Multifunctional CCA protein (416 aa).

Residues glycine 8 and arginine 11 each contribute to the ATP site. The CTP site is built by glycine 8 and arginine 11. Aspartate 21 and aspartate 23 together coordinate Mg(2+). 3 residues coordinate ATP: arginine 91, arginine 138, and arginine 141. Arginine 91, arginine 138, and arginine 141 together coordinate CTP. In terms of domain architecture, HD spans 229 to 331 (TGLHQELVSD…YELLQRCDAF (103 aa)).

The protein belongs to the tRNA nucleotidyltransferase/poly(A) polymerase family. Bacterial CCA-adding enzyme type 1 subfamily. In terms of assembly, monomer. Can also form homodimers and oligomers. Mg(2+) serves as cofactor. Ni(2+) is required as a cofactor.

The catalysed reaction is a tRNA precursor + 2 CTP + ATP = a tRNA with a 3' CCA end + 3 diphosphate. It carries out the reaction a tRNA with a 3' CCA end + 2 CTP + ATP = a tRNA with a 3' CCACCA end + 3 diphosphate. Functionally, catalyzes the addition and repair of the essential 3'-terminal CCA sequence in tRNAs without using a nucleic acid template. Adds these three nucleotides in the order of C, C, and A to the tRNA nucleotide-73, using CTP and ATP as substrates and producing inorganic pyrophosphate. tRNA 3'-terminal CCA addition is required both for tRNA processing and repair. Also involved in tRNA surveillance by mediating tandem CCA addition to generate a CCACCA at the 3' terminus of unstable tRNAs. While stable tRNAs receive only 3'-terminal CCA, unstable tRNAs are marked with CCACCA and rapidly degraded. This is Multifunctional CCA protein from Xylella fastidiosa (strain M23).